The primary structure comprises 286 residues: Plasma membrane ascorbate-dependent reductase CYBRD1 (286 aa).

Topologically, residues 1-7 are cytoplasmic; that stretch reads MAMEGYW. Residues 8–32 traverse the membrane as a helical segment; that stretch reads RFLALLGSALLVGFLSVIFALVWVL. The Cytochrome b561 domain occupies 15 to 220; that stretch reads SALLVGFLSV…FGALIFWIVT (206 aa). Residues 33–47 lie on the Extracellular side of the membrane; the sequence is HYREGLGWDGSALEF. A helical transmembrane segment spans residues 48–69; the sequence is NWHPVLMVTGFVFIQGIAIIVY. Heme b is bound by residues His50, Arg70, and Lys79. The Cytoplasmic portion of the chain corresponds to 70 to 78; that stretch reads RLPWTWKCS. Residues Lys79 and Lys83 each contribute to the L-ascorbate site. The chain crosses the membrane as a helical span at residues 79 to 105; sequence KLLMKSIHAGLNAVAAILAIISVVAVF. His86 is a heme b binding site. At 106 to 118 the chain is on the extracellular side; sequence ENHNVNNIANMYS. His108 contacts Fe(3+). Residues 115-118 and His120 each bind heme b; that span reads NMYS. A helical transmembrane segment spans residues 119 to 144; sequence LHSWVGLIAVICYLLQLLSGFSVFLL. Over 145–151 the chain is Cytoplasmic; it reads PWAPLSL. Residue Arg152 coordinates L-ascorbate. The helical transmembrane segment at 152–179 threads the bilayer; that stretch reads RAFLMPIHVYSGIVIFGTVIATALMGLT. The heme b site is built by His159 and Glu180. Over 180–197 the chain is Extracellular; sequence EKLIFSLRDPAYSTFPPE. Residues 198–222 traverse the membrane as a helical segment; that stretch reads GVFVNTLGLLILVFGALIFWIVTRP. The Cytoplasmic segment spans residues 223–286; that stretch reads QWKRPKEPNS…LDEAGQRSTM (64 aa). Lys225 contributes to the heme b binding site. The disordered stretch occupies residues 229 to 268; that stretch reads EPNSTILHPNGGTEQGARGSMPAYSGNNMDKSDSELNSEV. At Ser232 the chain carries Phosphoserine. Position 285 is a phosphothreonine (Thr285).

Homodimer. Heme b is required as a cofactor. Present in erythrocyte membranes (at protein level). Also expressed in respiratory epithelium.

The protein localises to the cell membrane. Its subcellular location is the apical cell membrane. The catalysed reaction is Fe(3+)(out) + L-ascorbate(in) = monodehydro-L-ascorbate radical(in) + Fe(2+)(out) + H(+). It catalyses the reaction Cu(2+)(out) + L-ascorbate(in) = Cu(+)(out) + monodehydro-L-ascorbate radical(in) + H(+). The enzyme catalyses monodehydro-L-ascorbate radical(out) + L-ascorbate(in) = monodehydro-L-ascorbate radical(in) + L-ascorbate(out). Its activity is regulated as follows. Activated by chelators like citrate, malate, and oxalate specially at alkaline pH. Plasma membrane reductase that uses cytoplasmic ascorbate as an electron donor to reduce extracellular Fe(3+) into Fe(2+). Probably functions in dietary iron absorption at the brush border of duodenal enterocytes by producing Fe(2+), the divalent form of iron that can be transported into enterocytes. It is also able to reduce extracellular monodehydro-L-ascorbate and may be involved in extracellular ascorbate regeneration by erythrocytes in blood. May also act as a ferrireductase in airway epithelial cells. May also function as a cupric transmembrane reductase. This is Plasma membrane ascorbate-dependent reductase CYBRD1 from Homo sapiens (Human).